A 72-amino-acid polypeptide reads, in one-letter code: Long neurotoxin OH-17 (72 aa).

Disulfide bonds link Cys3/Cys21, Cys14/Cys42, Cys27/Cys31, Cys46/Cys57, and Cys58/Cys63.

This sequence belongs to the three-finger toxin family. Long-chain subfamily. Type II alpha-neurotoxin sub-subfamily. In terms of tissue distribution, expressed by the venom gland.

It is found in the secreted. Binds with high affinity to muscular (alpha-1/CHRNA1) and neuronal (alpha-7/CHRNA7) nicotinic acetylcholine receptor (nAChR) and inhibits acetylcholine from binding to the receptor, thereby impairing neuromuscular and neuronal transmission. This is Long neurotoxin OH-17 from Ophiophagus hannah (King cobra).